Consider the following 607-residue polypeptide: Vacuolar fusion protein MON1 homolog (607 aa).

Residues Met-1–Asp-14 are compositionally biased toward low complexity. 2 disordered regions span residues Met-1–Ser-173 and Pro-463–Val-486. The segment covering Asn-21–Glu-55 has biased composition (polar residues).

It belongs to the MON1/SAND family. In terms of assembly, interacts with CCZ1A, CCZ1B and RABF2B. In terms of tissue distribution, widely expressed at stable levels.

It localises to the endosome. The protein localises to the prevacuolar compartment. Plays an important role in membrane trafficking through the secretory apparatus. In complex with CCZ1, acts as a guanine exchange factor (GEF) for RABG3F of the Rab7 protein family. Promotes the exchange of GDP to GTP, converting RABG3F from an inactive GDP-bound form into an active GTP-bound form. The RABG3F active form is involved in protein trafficking from prevacuolar compartments (PVCs) to vacuoles. May serve as a linker between Rab5 and Rab7 protein families in PVCs and mediate PVC maturation. The sequence is that of Vacuolar fusion protein MON1 homolog from Arabidopsis thaliana (Mouse-ear cress).